The primary structure comprises 326 residues: Cell surface glycoprotein CD200 receptor 1 (326 aa).

The signal sequence occupies residues 1–25 (MFCFWRTSALAVLLIWGVFVAGSSC). Residues 26–238 (TDKNQTTQNN…SRGGNQSLRP (213 aa)) lie on the Extracellular side of the membrane. Residues N29, N34, N35, N44, N93, N101, N159, N192, N207, N221, and N233 are each glycosylated (N-linked (GlcNAc...) asparagine). The 86-residue stretch at 51-136 (IGTKALLCCF…YTCETVTPEG (86 aa)) folds into the Ig-like V-type domain. Intrachain disulfides connect C58/C129 and C82/C97. In terms of domain architecture, Ig-like C2-type spans 138–229 (FEKNYDLQVL…GNQSLSIELS (92 aa)). 2 disulfide bridges follow: C164-C213 and C183-C201. The helical transmembrane segment at 239-259 (YIPYIIPSIIILIIIGCICLL) threads the bilayer. The Cytoplasmic segment spans residues 260 to 326 (KISGFRKCKL…DCLTLSAIGI (67 aa)).

It belongs to the CD200R family. In terms of assembly, CD200 and CD200R1 interact via their respective N-terminal Ig-like domains. In terms of tissue distribution, expressed in granulocytes, monocytes, most T-cells and a subset of NK, NKT and B-cells (at protein level). Expressed in the spleen, lung, liver, testis, bone marrow, lymph nodes, spinal cord, kidney, uterus and small intestine. Expressed in mast and dendritic cells. Expressed in the lung of N.brasiliensis-infected mice.

Its subcellular location is the cell membrane. Its function is as follows. Inhibitory receptor for the CD200/OX2 cell surface glycoprotein. Limits inflammation by inhibiting the expression of pro-inflammatory molecules including TNF-alpha, interferons, and inducible nitric oxide synthase (iNOS) in response to selected stimuli. In Mus musculus (Mouse), this protein is Cell surface glycoprotein CD200 receptor 1 (Cd200r1).